Reading from the N-terminus, the 807-residue chain is Dual specificity protein phosphatase PPS1 (807 aa).

The Tyrosine-protein phosphatase domain occupies L585–N783. A catalytic region spans residues L593 to T807. C725 serves as the catalytic Phosphocysteine intermediate.

The protein belongs to the protein-tyrosine phosphatase family. Non-receptor class dual specificity subfamily.

The enzyme catalyses O-phospho-L-tyrosyl-[protein] + H2O = L-tyrosyl-[protein] + phosphate. It carries out the reaction O-phospho-L-seryl-[protein] + H2O = L-seryl-[protein] + phosphate. The catalysed reaction is O-phospho-L-threonyl-[protein] + H2O = L-threonyl-[protein] + phosphate. Protein phosphatase with specificity for serine, threonine, and tyrosine residues; has a role in the DNA synthesis phase of the cell cycle. This Saccharomyces cerevisiae (strain ATCC 204508 / S288c) (Baker's yeast) protein is Dual specificity protein phosphatase PPS1 (PPS1).